The primary structure comprises 431 residues: Glucose-1-phosphate adenylyltransferase (431 aa).

K39 provides a ligand contact to beta-D-fructose 1,6-bisphosphate. 3 residues coordinate AMP: R40, H46, and R52. An alpha-D-glucose 1-phosphate-binding site is contributed by Y114. R130 serves as a coordination point for AMP. Residues G179, 194 to 195 (EK), and S212 contribute to the alpha-D-glucose 1-phosphate site. Positions 370 and 386 each coordinate AMP. Beta-D-fructose 1,6-bisphosphate is bound by residues 419–423 (REMLR) and 429–431 (QER).

Belongs to the bacterial/plant glucose-1-phosphate adenylyltransferase family. Homotetramer.

The catalysed reaction is alpha-D-glucose 1-phosphate + ATP + H(+) = ADP-alpha-D-glucose + diphosphate. It participates in glycan biosynthesis; glycogen biosynthesis. Allosterically activated by fructose-1,6-bisphosphate (F16BP) and inhibited by AMP. Functionally, involved in the biosynthesis of ADP-glucose, a building block required for the elongation reactions to produce glycogen. Catalyzes the reaction between ATP and alpha-D-glucose 1-phosphate (G1P) to produce pyrophosphate and ADP-Glc. In Salmonella dublin (strain CT_02021853), this protein is Glucose-1-phosphate adenylyltransferase.